The sequence spans 418 residues: MSIEIPAGLTELLQGFTVEVLRHQPADLLEFALQHFTRLQEENERKGTARFGHEGRTWGDAGAAGGGGTPSKGVNFAEEPRHSDSENGEEEEEEAADAGAFNAPVINRFTRRASVCAEAYNPDEEEDDAESRIIHPKTDDQRNRLQEACKDILLFKNLDPEQMSQVLDAMFEKLVKEGEHVIDQGDDGDNFYVIDRGTFDIYVKCDGVGRCVGNYDNRGSFGELALMYNTPRAATITATSPGALWGLDRVTFRRIIVKNNAKKRKMYESFIESLPFLKSLEVSERLKVVDVIGTKVYNDGEQIIAQGDSADSFFIVESGEVKITMKRKGKSEVEENGAVEIARCSRGQYFGELALVTNKPRAASAHAIGTVKCLAMDVQAFERLLGPCMEIMKRNIATYEEQLVALFGTNMDIVEPTA.

The dimerization and phosphorylation stretch occupies residues 2-153 (SIEIPAGLTE…RLQEACKDIL (152 aa)). Residues 45-57 (RKGTARFGHEGRT) are compositionally biased toward basic and acidic residues. The interval 45 to 98 (RKGTARFGHEGRTWGDAGAAGGGGTPSKGVNFAEEPRHSDSENGEEEEEEAADA) is disordered. Threonine 69 carries the post-translational modification Phosphothreonine. Residues serine 83 and serine 85 each carry the phosphoserine modification. The span at 86–96 (ENGEEEEEEAA) shows a compositional bias: acidic residues. Phosphoserine is present on serine 114. 3',5'-cyclic AMP contacts are provided by residues 154–275 (LFKN…ESLP), glutamate 223, arginine 232, 276–418 (FLKS…EPTA), glutamate 352, and arginine 361.

It belongs to the cAMP-dependent kinase regulatory chain family. The inactive form of the enzyme is composed of two regulatory chains and two catalytic chains. Activation by cAMP produces two active catalytic monomers and a regulatory dimer that binds four cAMP molecules. Interacts with PRKACA and PRKACB. Interacts with the phosphorylated form of PJA2. Forms a complex composed of PRKAR2B, GSK3B and GSKIP through GSKIP interaction; facilitates PKA-induced phosphorylation and regulates GSK3B activity. In terms of processing, phosphorylated by the activated catalytic chain. Four types of regulatory chains are found: I-alpha, I-beta, II-alpha, and II-beta. Their expression varies among tissues and is in some cases constitutive and in others inducible.

It is found in the cytoplasm. Its subcellular location is the cell membrane. Regulatory subunit of the cAMP-dependent protein kinases involved in cAMP signaling in cells. Type II regulatory chains mediate membrane association by binding to anchoring proteins, including the MAP2 kinase. The polypeptide is cAMP-dependent protein kinase type II-beta regulatory subunit (PRKAR2B) (Bos taurus (Bovine)).